A 379-amino-acid polypeptide reads, in one-letter code: Cytochrome b (379 aa).

The next 4 helical transmembrane spans lie at Phe33–Met53, Trp77–Ile98, Trp113–Leu133, and Phe178–Leu198. Heme b-binding residues include His83 and His97. Residues His182 and His196 each coordinate heme b. His201 lines the a ubiquinone pocket. 4 helical membrane-spanning segments follow: residues Tyr226–Ser246, Leu288–His308, Phe320–Gly340, and Phe347–Pro367.

The protein belongs to the cytochrome b family. As to quaternary structure, the cytochrome bc1 complex contains 3 respiratory subunits (MT-CYB, CYC1 and UQCRFS1), 2 core proteins (UQCRC1 and UQCRC2) and probably 6 low-molecular weight proteins. The cofactor is heme b.

Its subcellular location is the mitochondrion inner membrane. Its function is as follows. Component of the ubiquinol-cytochrome c reductase complex (complex III or cytochrome b-c1 complex) that is part of the mitochondrial respiratory chain. The b-c1 complex mediates electron transfer from ubiquinol to cytochrome c. Contributes to the generation of a proton gradient across the mitochondrial membrane that is then used for ATP synthesis. In Iguana iguana (Common iguana), this protein is Cytochrome b (MT-CYB).